The sequence spans 305 residues: MPKVGIIFNDDKPTACSVAQELQEQLQQSGFTVAMETGSGGLLGYSQPDRPICHTRIEHLTPPHFDESMPFAIVLGGDGTVLSAFRQLAPLGIPLLTINTGHMGFLTEIYLNQLPTAIEQLINGDYQIESRSMMTVRLMREENLLWEALSLNEMVLHREPLTSMCHFEIQVGYHASVDIAADGIIVSTPTGSTAYSLSAGGPVVTPDVPVFQLAPICPHSLASRALVFSDLEPVTIFPATPNRMVLVVDGNGGCYVLPEDRVHLSKSPYPAKFIRLQTPEFFRILREKLGWGLPHIAKPTSVELP.

D78 serves as the catalytic Proton acceptor. Residues 78 to 79 (DG), 152 to 153 (NE), D182, 193 to 198 (TAYSLS), and N251 contribute to the NAD(+) site.

Belongs to the NAD kinase family. Requires a divalent metal cation as cofactor.

The protein localises to the cytoplasm. It carries out the reaction NAD(+) + ATP = ADP + NADP(+) + H(+). Its function is as follows. Involved in the regulation of the intracellular balance of NAD and NADP, and is a key enzyme in the biosynthesis of NADP. Catalyzes specifically the phosphorylation on 2'-hydroxyl of the adenosine moiety of NAD to yield NADP. Functions as a growth repressor under light-activated heterotrophic growth conditions and light and dark cycle conditions in the presence of glucose. NADP(H)/NAD(H) maintenance by slr0400 probably plays a significant role in modulating glycolysis and the TCA cycle to repress the growth rate and maintain the photosynthetic capacity. The chain is NAD kinase 2 from Synechocystis sp. (strain ATCC 27184 / PCC 6803 / Kazusa).